The sequence spans 78 residues: Acyl carrier protein (78 aa).

The region spanning 2–77 (STIEESVKAI…AAIDFIQASQ (76 aa)) is the Carrier domain. Residue Ser37 is modified to O-(pantetheine 4'-phosphoryl)serine.

Belongs to the acyl carrier protein (ACP) family. 4'-phosphopantetheine is transferred from CoA to a specific serine of apo-ACP by AcpS. This modification is essential for activity because fatty acids are bound in thioester linkage to the sulfhydryl of the prosthetic group.

The protein localises to the cytoplasm. It participates in lipid metabolism; fatty acid biosynthesis. In terms of biological role, carrier of the growing fatty acid chain in fatty acid biosynthesis. The chain is Acyl carrier protein from Sodalis glossinidius (strain morsitans).